The following is a 385-amino-acid chain: Digeranylgeranylglycerophospholipid reductase 2 (385 aa).

Positions 13, 32, 43, 44, 46, 95, 119, 273, 285, and 286 each coordinate FAD.

This sequence belongs to the geranylgeranyl reductase family. DGGGPL reductase subfamily. Requires FAD as cofactor.

The enzyme catalyses a 2,3-bis-O-phytanyl-sn-glycerol 1-phospholipid + 8 A = a 2,3-bis-O-(geranylgeranyl)-sn-glycerol 1-phospholipid + 8 AH2. The catalysed reaction is 2,3-bis-O-(phytanyl)-sn-glycerol 1-phosphate + 8 A = 2,3-bis-O-(geranylgeranyl)-sn-glycerol 1-phosphate + 8 AH2. It carries out the reaction CDP-2,3-bis-O-(geranylgeranyl)-sn-glycerol + 8 AH2 = CDP-2,3-bis-O-(phytanyl)-sn-glycerol + 8 A. It catalyses the reaction archaetidylserine + 8 AH2 = 2,3-bis-O-phytanyl-sn-glycero-3-phospho-L-serine + 8 A. It participates in membrane lipid metabolism; glycerophospholipid metabolism. Its function is as follows. Is involved in the reduction of 2,3-digeranylgeranylglycerophospholipids (unsaturated archaeols) into 2,3-diphytanylglycerophospholipids (saturated archaeols) in the biosynthesis of archaeal membrane lipids. Catalyzes the formation of archaetidic acid (2,3-di-O-phytanyl-sn-glyceryl phosphate) from 2,3-di-O-geranylgeranylglyceryl phosphate (DGGGP) via the hydrogenation of each double bond of the isoprenoid chains. Is also probably able to reduce double bonds of geranyl groups in CDP-2,3-bis-O-(geranylgeranyl)-sn-glycerol and archaetidylserine, thus acting at various stages in the biosynthesis of archaeal membrane lipids. This chain is Digeranylgeranylglycerophospholipid reductase 2, found in Methanothermobacter thermautotrophicus (strain ATCC 29096 / DSM 1053 / JCM 10044 / NBRC 100330 / Delta H) (Methanobacterium thermoautotrophicum).